Here is an 86-residue protein sequence, read N- to C-terminus: Kappa-theraphotoxin-Cg1a 3 (86 aa).

Positions 1–21 (MKVSVLITLAVLGVMFVWASA) are cleaved as a signal peptide. The propeptide occupies 22–50 (AELEERGSDQRDSPAWLKSMERIFRSEER). Cystine bridges form between Cys52–Cys66, Cys59–Cys71, and Cys65–Cys78. Phe84 is modified (phenylalanine amide).

Belongs to the neurotoxin 10 (Hwtx-1) family. 28 (Jztx-11) subfamily. In terms of tissue distribution, expressed by the venom gland.

Its subcellular location is the secreted. This toxin acts as a voltage-dependent gating-modifier. It inhibits the sodium conductance (IC(50)=124 nM) and slows the fast inactivation (EC(50)=1180 nM) of Nav1.5/SCN5A. It significantly shifts the activation to more depolarized voltages and decreases the deactivation of Nav1.5 currents upon extreme depolarization, but only slightly affects voltage-dependence of steady-state inactivation. In addition, this toxin causes an approximately five-fold decrease in the rate of recovery from inactivation and an approximately 1.9-fold reduction in the closed-state inactivation rate. This toxin integrates the functions of site 3 toxins (alpha-scorpion toxins) with site 4 toxins (beta-scorpion and spider toxins) by targeting multiple sites on Nav1.5. Also shows inhibition of voltage-gated potassium channels (5 uM completely inhibits Kv2.1/KCNB1, whereas 5 uM moderately inhibits Kv4.2/KCND2 Kv4.1/KCND1 channels). The polypeptide is Kappa-theraphotoxin-Cg1a 3 (Chilobrachys guangxiensis (Chinese earth tiger tarantula)).